Here is a 244-residue protein sequence, read N- to C-terminus: 3-deoxy-manno-octulosonate cytidylyltransferase (244 aa).

This sequence belongs to the KdsB family.

The protein localises to the cytoplasm. It carries out the reaction 3-deoxy-alpha-D-manno-oct-2-ulosonate + CTP = CMP-3-deoxy-beta-D-manno-octulosonate + diphosphate. Its pathway is nucleotide-sugar biosynthesis; CMP-3-deoxy-D-manno-octulosonate biosynthesis; CMP-3-deoxy-D-manno-octulosonate from 3-deoxy-D-manno-octulosonate and CTP: step 1/1. It functions in the pathway bacterial outer membrane biogenesis; lipopolysaccharide biosynthesis. Its function is as follows. Activates KDO (a required 8-carbon sugar) for incorporation into bacterial lipopolysaccharide in Gram-negative bacteria. In Vesicomyosocius okutanii subsp. Calyptogena okutanii (strain HA), this protein is 3-deoxy-manno-octulosonate cytidylyltransferase.